A 635-amino-acid chain; its full sequence is 5-aminolevulinate synthase, non-specific, mitochondrial (635 aa).

The transit peptide at 1-56 directs the protein to the mitochondrion; sequence MEAVVRRCPFLARVSQAFLQKAGPSLLFYAQHCPKMMEAAPPAAARGLATSASRGQ. Residues 44–66 show a composition bias toward low complexity; sequence AARGLATSASRGQQVEETPAAQP. A disordered region spans residues 44-94; sequence AARGLATSASRGQQVEETPAAQPEAKKAKEVAQQNTDGSQPPAGHPPAAAV. Residues arginine 212, serine 329, and lysine 348 each coordinate substrate. Pyridoxal 5'-phosphate-binding residues include serine 381, histidine 409, and threonine 437. Residue lysine 440 is part of the active site. Lysine 440 is subject to N6-(pyridoxal phosphate)lysine. 2 residues coordinate pyridoxal 5'-phosphate: threonine 469 and threonine 470. Threonine 557 is a substrate binding site.

The protein belongs to the class-II pyridoxal-phosphate-dependent aminotransferase family. In terms of assembly, homodimer. The cofactor is pyridoxal 5'-phosphate. As to expression, ubiquitous.

The protein localises to the mitochondrion inner membrane. It carries out the reaction succinyl-CoA + glycine + H(+) = 5-aminolevulinate + CO2 + CoA. The protein operates within porphyrin-containing compound metabolism; protoporphyrin-IX biosynthesis; 5-aminolevulinate from glycine: step 1/1. Functionally, catalyzes the pyridoxal 5'-phosphate (PLP)-dependent condensation of succinyl-CoA and glycine to form aminolevulinic acid (ALA), with CoA and CO2 as by-products. This is 5-aminolevulinate synthase, non-specific, mitochondrial (ALAS1) from Gallus gallus (Chicken).